Reading from the N-terminus, the 437-residue chain is GTPase Obg (437 aa).

The Obg domain occupies 2–160 (SMFLDTAKIS…RQLELELKIL (159 aa)). The OBG-type G domain occupies 161 to 338 (ADVGLVGFPS…LLEATAELLA (178 aa)). GTP-binding positions include 167-174 (GFPSVGKS), 192-196 (FTTIV), 214-217 (DLPG), 284-287 (NKMD), and 319-321 (SSL). S174 and T194 together coordinate Mg(2+). Residues 359-437 (GFAEAEKEFE…IGKFEFEFVD (79 aa)) form the OCT domain.

It belongs to the TRAFAC class OBG-HflX-like GTPase superfamily. OBG GTPase family. In terms of assembly, monomer. It depends on Mg(2+) as a cofactor.

It is found in the cytoplasm. Its function is as follows. An essential GTPase which binds GTP, GDP and possibly (p)ppGpp with moderate affinity, with high nucleotide exchange rates and a fairly low GTP hydrolysis rate. Plays a role in control of the cell cycle, stress response, ribosome biogenesis and in those bacteria that undergo differentiation, in morphogenesis control. The chain is GTPase Obg from Streptococcus pyogenes serotype M28 (strain MGAS6180).